The following is a 342-amino-acid chain: Platelet-activating factor receptor (342 aa).

Residues 1 to 16 are Extracellular-facing; that stretch reads MELNSSSRVDSEFRYT. Residue Asn-4 is glycosylated (N-linked (GlcNAc...) asparagine). Residues 17-38 traverse the membrane as a helical segment; it reads LFPIVYSIIFVLGIIANGYVLW. Over 39-54 the chain is Cytoplasmic; that stretch reads VFARLYPSKKLNEIKI. A helical transmembrane segment spans residues 55-74; it reads FMVNLTVADLLFLITLPLWI. The Extracellular segment spans residues 75–91; that stretch reads VYYSNQGNWFLPKFLCN. An intrachain disulfide couples Cys-90 to Cys-173. Residues 92–113 traverse the membrane as a helical segment; the sequence is LAGCLFFINTYCSVAFLGVITY. Topologically, residues 114-133 are cytoplasmic; the sequence is NRFQAVKYPIKTAQATTRKR. A helical membrane pass occupies residues 134–155; it reads GIALSLVIWVAIVAAASYFLVM. Residues 156 to 184 are Extracellular-facing; that stretch reads DSTNVVSNKAGSGNITRCFEHYEKGSKPV. Asn-169 is a glycosylation site (N-linked (GlcNAc...) asparagine). The helical transmembrane segment at 185–205 threads the bilayer; sequence LIIHICIVLGFFIVFLLILFC. Residues 206–233 lie on the Cytoplasmic side of the membrane; sequence NLVIIHTLLRQPVKQQRNAEVRRRALWM. The chain crosses the membrane as a helical span at residues 234–254; sequence VCTVLAVFVICFVPHHMVQLP. Residues 255 to 276 are Extracellular-facing; that stretch reads WTLAELGMWPSSNHQAINDAHQ. A helical membrane pass occupies residues 277–296; sequence VTLCLLSTNCVLDPVIYCFL. Residues 297 to 342 are Cytoplasmic-facing; sequence TKKFRKHLSEKLNIMRSSQKCSRVTTDTGTEMAIPINHTPVNPIKN.

Belongs to the G-protein coupled receptor 1 family. Interacts with ARRB1.

The protein localises to the cell membrane. In terms of biological role, receptor for platelet activating factor, a chemotactic phospholipid mediator that possesses potent inflammatory, smooth-muscle contractile and hypotensive activity. Seems to mediate its action via a G protein that activates a phosphatidylinositol-calcium second messenger system. The sequence is that of Platelet-activating factor receptor (PTAFR) from Cavia porcellus (Guinea pig).